A 266-amino-acid chain; its full sequence is Dihydropteroate synthase (266 aa).

Residues 12 to 260 (AAIMGILNVT…DVKANQDIVA (249 aa)) enclose the Pterin-binding domain. Asparagine 19 provides a ligand contact to Mg(2+). (7,8-dihydropterin-6-yl)methyl diphosphate contacts are provided by residues threonine 59, aspartate 93, asparagine 112, aspartate 176, lysine 212, and 248-250 (RVH).

The protein belongs to the DHPS family. Homodimer or homotrimer. The cofactor is Mg(2+).

It catalyses the reaction (7,8-dihydropterin-6-yl)methyl diphosphate + 4-aminobenzoate = 7,8-dihydropteroate + diphosphate. It participates in cofactor biosynthesis; tetrahydrofolate biosynthesis; 7,8-dihydrofolate from 2-amino-4-hydroxy-6-hydroxymethyl-7,8-dihydropteridine diphosphate and 4-aminobenzoate: step 1/2. In terms of biological role, catalyzes the condensation of para-aminobenzoate (pABA) with 6-hydroxymethyl-7,8-dihydropterin diphosphate (DHPt-PP) to form 7,8-dihydropteroate (H2Pte), the immediate precursor of folate derivatives. The sequence is that of Dihydropteroate synthase (folP) from Streptococcus pyogenes serotype M1.